We begin with the raw amino-acid sequence, 60 residues long: Large ribosomal subunit protein bL32 (60 aa).

Belongs to the bacterial ribosomal protein bL32 family.

This chain is Large ribosomal subunit protein bL32, found in Azotobacter vinelandii (strain DJ / ATCC BAA-1303).